The chain runs to 215 residues: Adenylate kinase (215 aa).

ATP is bound at residue 10–15 (GAGKGT). The segment at 30 to 59 (STGDMLRAAVKAETELGLKAKSVMDSGGLV) is NMP. AMP-binding positions include Thr31, Arg36, 57 to 59 (GLV), 85 to 88 (GFPR), and Gln92. The tract at residues 122–159 (GRRVHEGSGRIYHTIFNPPKVEGIDDVTGEPLLQRKDD) is LID. Residues Arg123 and 132–133 (IY) contribute to the ATP site. Arg156 and Arg167 together coordinate AMP. Gly201 contacts ATP.

Belongs to the adenylate kinase family. As to quaternary structure, monomer.

The protein resides in the cytoplasm. The catalysed reaction is AMP + ATP = 2 ADP. Its pathway is purine metabolism; AMP biosynthesis via salvage pathway; AMP from ADP: step 1/1. Catalyzes the reversible transfer of the terminal phosphate group between ATP and AMP. Plays an important role in cellular energy homeostasis and in adenine nucleotide metabolism. The chain is Adenylate kinase from Pseudomonas syringae pv. syringae (strain B728a).